We begin with the raw amino-acid sequence, 117 residues long: MIVGIGIDLIELKRIEAAFARQPRFPGRVLTSYEQDQMAQLAPNRQIEYLAGRFAAKEAFAKAKGTGIGAGLSWHDIEIRTEGSGKPYIVVNDDSARVHLSITHSKEYAAAQVVIET.

2 residues coordinate Mg(2+): Asp8 and Glu58.

The protein belongs to the P-Pant transferase superfamily. AcpS family. It depends on Mg(2+) as a cofactor.

It localises to the cytoplasm. It catalyses the reaction apo-[ACP] + CoA = holo-[ACP] + adenosine 3',5'-bisphosphate + H(+). In terms of biological role, transfers the 4'-phosphopantetheine moiety from coenzyme A to a Ser of acyl-carrier-protein. In Shouchella clausii (strain KSM-K16) (Alkalihalobacillus clausii), this protein is Holo-[acyl-carrier-protein] synthase.